We begin with the raw amino-acid sequence, 442 residues long: UDP-N-acetylmuramoylalanine--D-glutamate ligase (442 aa).

Residue 109–115 (GSNGKTT) participates in ATP binding.

The protein belongs to the MurCDEF family.

The protein localises to the cytoplasm. The catalysed reaction is UDP-N-acetyl-alpha-D-muramoyl-L-alanine + D-glutamate + ATP = UDP-N-acetyl-alpha-D-muramoyl-L-alanyl-D-glutamate + ADP + phosphate + H(+). It participates in cell wall biogenesis; peptidoglycan biosynthesis. Its function is as follows. Cell wall formation. Catalyzes the addition of glutamate to the nucleotide precursor UDP-N-acetylmuramoyl-L-alanine (UMA). This chain is UDP-N-acetylmuramoylalanine--D-glutamate ligase, found in Solibacter usitatus (strain Ellin6076).